The sequence spans 399 residues: Argininosuccinate synthase (399 aa).

12–20 (AFSGGLDTS) provides a ligand contact to ATP. Tyr90 lines the L-citrulline pocket. Gly120 is an ATP binding site. The L-aspartate site is built by Thr122, Asn126, and Asp127. Asn126 is an L-citrulline binding site. Residues Arg130, Ser175, Glu260, and Tyr272 each coordinate L-citrulline.

Belongs to the argininosuccinate synthase family. Type 1 subfamily. As to quaternary structure, homotetramer.

Its subcellular location is the cytoplasm. The enzyme catalyses L-citrulline + L-aspartate + ATP = 2-(N(omega)-L-arginino)succinate + AMP + diphosphate + H(+). It functions in the pathway amino-acid biosynthesis; L-arginine biosynthesis; L-arginine from L-ornithine and carbamoyl phosphate: step 2/3. The sequence is that of Argininosuccinate synthase from Methanothermobacter thermautotrophicus (strain ATCC 29096 / DSM 1053 / JCM 10044 / NBRC 100330 / Delta H) (Methanobacterium thermoautotrophicum).